Reading from the N-terminus, the 901-residue chain is MIPGMRATPTESFSFVYSCDLQTNVQVKVAEFEGIFRDVLNPVRRLNQLFAEITVYCNNQQIGYPVCTSFHTPPDSSQLARQKLIQKWNEWLTLPIRYSDLSRDAFLHITIWEHEDDEIVNNSTFSRRLVAQSKLSMFSKRGILKSGVIDVQMNVSTTPDPFVKQPETWKYSDAWGDEIDLLFKQVTRQSRGLVEDVPWLDPFASRRIEMIRAKYKYSSPDRHVFLVLEMAAIRLGPTFYKVVYYEDETKNMRVSTSVNGGVGIVSACTRYCVADPELLLESLAEVKHSAMTRRIRDVEDERHRQVKPNKQAKDRLETIVNLPSSQVLTREQRDLVWKFRHYLRQFPKALNKYLRSVNWVHPQEVKTALALMNDWELIEAEDALELLSSAFTHPAVRAYSVSRLLEAASPEQVLLYLPQLVQALKYEQGQQLPEEGNPVPVVSEEEGKIPSVATTPTEELEGRDMTVVTKKEARKAASGDLATFLIDYALASPKVSNYLYWHLKTEIESTKESKEEHSKMYQNIQDRLMEALVKRPDTRAQVDSLHQQQIFVEDLIILMNEAKARGGRLNESKSAEFRTMLSRAKHMLDLKGVHLPLDPSFRLSSVIPDTASFFKSEMMPAKISFKVLQPNGKADRNIPEEYTVIFKTGDDLRQDQLIQQMVRLIDIILKKGQLDLKLTPYLVLSTGVGQGFVQCIKSKPLRAIQEQYKAHKMDCIREAMKELRPGDGPFGIEPNVIDNYVRSLAGYSVIMYILGLGDRHLDNLLLCENGKLFHVDFGFILGRDPKPMPPPMKLTSEMVQVMGGVKSKQFLEFVQHVDSAYRILRRHSNVLLNLFSLMLDAGIPDIAAEPDKAIFKIEQRLRLDLSDEAATKHIFTQIESSLNAKMAMISDIIHAYKQNLM.

Residues L21–Q189 form the C2 PI3K-type domain. The PIK helical domain maps to R302–R527. The PI3K/PI4K catalytic domain occupies I607–M886. Positions F613–M619 are G-loop. The catalytic loop stretch occupies residues G755–N763. An activation loop region spans residues H774–T795.

Belongs to the PI3/PI4-kinase family. As to quaternary structure, interacts with bec-1. May interact with dyn-1. The cofactor is Mn(2+). Ubiquitous.

Its subcellular location is the nucleus outer membrane. The protein localises to the cytoplasm. It localises to the cytoplasmic granule. It is found in the cell projection. The protein resides in the phagocytic cup. The enzyme catalyses a 1,2-diacyl-sn-glycero-3-phospho-(1D-myo-inositol) + ATP = a 1,2-diacyl-sn-glycero-3-phospho-(1D-myo-inositol-3-phosphate) + ADP + H(+). With respect to regulation, inhibited by wortmannin. Catalytic subunit of the PI3K complex that mediates formation of phosphatidylinositol 3-phosphate. Together with bec-1, mediates the production of phosphatidylinositol 3-phosphate on intracellular vesicles and thereby regulates membrane trafficking. Plays a role in endosome-to-Golgi retrograde transport of mig-14. Involved in clearance of apoptotic cell corpses by phagosomes. Phagosome maturation requires two sequential and non-overlapping pulses of phosphatidylinositol-3-phosphate (PI3P) on the vesicle surface which mediates recruitment of sortins snx-1 and lst-4 and small GTPases rab-5, rab-2 and rab-7, downstream of dynamin dyn-1. The first pulse is initiated by piki-1, then maintained by vps-34 which also produces the second pulse. Required for embryonic development. Together with bec-1, involved in L3/L4 larval molting stage probably by regulating cuticle shedding. Regulates the expansion of the nucleus outer membrane. Involved in the secretion and localization of lrp-1 at the apical surface of hyp7 syncytium. May regulate endocytosis in hypodermal cells. May play a role in the formation of gut granules (a lysosome-related organelle). Plays a role in germ stem cell proliferation during larval development. The protein is Phosphatidylinositol 3-kinase catalytic subunit type 3 of Caenorhabditis elegans.